The primary structure comprises 211 residues: Glycerol-3-phosphate acyltransferase (211 aa).

5 helical membrane-spanning segments follow: residues 8 to 28 (YCLA…LILT), 84 to 104 (LALP…WLGF), 116 to 136 (VLLA…FAVA), 145 to 165 (AALC…GMGL), and 170 to 190 (LAQS…LVFL).

The protein belongs to the PlsY family. Probably interacts with PlsX.

Its subcellular location is the cell inner membrane. The enzyme catalyses an acyl phosphate + sn-glycerol 3-phosphate = a 1-acyl-sn-glycero-3-phosphate + phosphate. It participates in lipid metabolism; phospholipid metabolism. Catalyzes the transfer of an acyl group from acyl-phosphate (acyl-PO(4)) to glycerol-3-phosphate (G3P) to form lysophosphatidic acid (LPA). This enzyme utilizes acyl-phosphate as fatty acyl donor, but not acyl-CoA or acyl-ACP. The sequence is that of Glycerol-3-phosphate acyltransferase from Granulibacter bethesdensis (strain ATCC BAA-1260 / CGDNIH1).